The following is a 245-amino-acid chain: Ribonuclease 3 (245 aa).

The RNase III domain maps to 17 to 146 (FTDKMKSLGL…FVGALYLDQG (130 aa)). Residue Glu-59 coordinates Mg(2+). Residue Asp-63 is part of the active site. Mg(2+) is bound by residues Asp-132 and Glu-135. Glu-135 is an active-site residue. The 70-residue stretch at 172–241 (DFKTQFQEYV…AEQAYKLMKN (70 aa)) folds into the DRBM domain.

This sequence belongs to the ribonuclease III family. As to quaternary structure, homodimer. The cofactor is Mg(2+).

The protein localises to the cytoplasm. It catalyses the reaction Endonucleolytic cleavage to 5'-phosphomonoester.. Functionally, digests double-stranded RNA. Involved in the processing of primary rRNA transcript to yield the immediate precursors to the large and small rRNAs (23S and 16S). Processes some mRNAs, and tRNAs when they are encoded in the rRNA operon. Processes pre-crRNA and tracrRNA of type II CRISPR loci if present in the organism. This Staphylococcus epidermidis (strain ATCC 12228 / FDA PCI 1200) protein is Ribonuclease 3.